A 237-amino-acid chain; its full sequence is MARKPTPPGTPQPTSVGHIVDLVRGAVPPLHPAGLPFVLAPLGVAVLGRNRKWVRRGALTSAAACAAFFRHPHRVPPNRVGVAVAPADGEVALVDSAVPPSELDMGTEPLPRVSIFLSVLDVHVQRSPVGGEVTKVVHRSGQFLSADLADASEVNERNSMLLHTAEGHDVAVIQIAGLLARRIVCDAKVGDTLPIGDTYGLIRFGSRVDTYFPAGTTLLAERGQRTIGAETVIAQLP.

Residue Ser-206 is the Schiff-base intermediate with substrate; via pyruvic acid of the active site. A Pyruvic acid (Ser); by autocatalysis modification is found at Ser-206.

The protein belongs to the phosphatidylserine decarboxylase family. PSD-A subfamily. As to quaternary structure, heterodimer of a large membrane-associated beta subunit and a small pyruvoyl-containing alpha subunit. Requires pyruvate as cofactor. Is synthesized initially as an inactive proenzyme. Formation of the active enzyme involves a self-maturation process in which the active site pyruvoyl group is generated from an internal serine residue via an autocatalytic post-translational modification. Two non-identical subunits are generated from the proenzyme in this reaction, and the pyruvate is formed at the N-terminus of the alpha chain, which is derived from the carboxyl end of the proenzyme. The post-translation cleavage follows an unusual pathway, termed non-hydrolytic serinolysis, in which the side chain hydroxyl group of the serine supplies its oxygen atom to form the C-terminus of the beta chain, while the remainder of the serine residue undergoes an oxidative deamination to produce ammonia and the pyruvoyl prosthetic group on the alpha chain.

The protein resides in the cell membrane. The catalysed reaction is a 1,2-diacyl-sn-glycero-3-phospho-L-serine + H(+) = a 1,2-diacyl-sn-glycero-3-phosphoethanolamine + CO2. It functions in the pathway phospholipid metabolism; phosphatidylethanolamine biosynthesis; phosphatidylethanolamine from CDP-diacylglycerol: step 2/2. Its function is as follows. Catalyzes the formation of phosphatidylethanolamine (PtdEtn) from phosphatidylserine (PtdSer). The polypeptide is Phosphatidylserine decarboxylase proenzyme (Rhodococcus opacus (strain B4)).